The primary structure comprises 450 residues: MDTIVAVATPPGKGAIAILRLSGPDSWKIVQKHLRTRSKIVPRKAIHGWIHENGEDVDEVVVVFYKSPKSYTGEDMVEVMCHGGPLVVKKLLDLFLKSGARMAEPGEFTKRAFLNGKMDLTSAEAVRDLIEAKSETSLKLSLRNLKGGLRDFVDSLRRELIEVLAEIRVELDYPDEIETNTGEVVTRLERIKEKLTEELKKADAGILLNRGLRMVIVGKPNVGKSTLLNRLLNEDRAIVTDIPGTTRDVISEEIVIRGILFRIVDTAGVRSETNDLVERLGIERTLQEIEKADIVLFVLDASSPLDEEDRKILERIKNKRYLVVINKVDVVEKINEEEIKNKLGTDRHMVKISALKGEGLEKLEESIYRETQEIFERGSDSLITNLRQKQLLENVKGHLEDAIKSLKEGMPVDMASIDLERALNLLDEVTGRSFREDLLDTIFSNFCVGK.

(6S)-5-formyl-5,6,7,8-tetrahydrofolate is bound by residues arginine 20, glutamate 78, and lysine 117. Residues 211 to 372 (GLRMVIVGKP…LEESIYRETQ (162 aa)) form the TrmE-type G domain. K(+) is bound at residue asparagine 221. GTP is bound by residues 221–226 (NVGKST), 240–246 (TDIPGTT), 265–268 (DTAG), 326–329 (NKVD), and 353–355 (SAL). Residue serine 225 coordinates Mg(2+). Threonine 240, isoleucine 242, and threonine 245 together coordinate K(+). Mg(2+) is bound at residue threonine 246. Lysine 450 provides a ligand contact to (6S)-5-formyl-5,6,7,8-tetrahydrofolate.

It belongs to the TRAFAC class TrmE-Era-EngA-EngB-Septin-like GTPase superfamily. TrmE GTPase family. As to quaternary structure, homodimer. Heterotetramer of two MnmE and two MnmG subunits. It depends on K(+) as a cofactor.

The protein localises to the cytoplasm. Its function is as follows. Exhibits a very high intrinsic GTPase hydrolysis rate. Involved in the addition of a carboxymethylaminomethyl (cmnm) group at the wobble position (U34) of certain tRNAs, forming tRNA-cmnm(5)s(2)U34. In Thermotoga maritima (strain ATCC 43589 / DSM 3109 / JCM 10099 / NBRC 100826 / MSB8), this protein is tRNA modification GTPase MnmE.